A 793-amino-acid chain; its full sequence is Ankyrin repeat domain-containing protein SOWAHB (793 aa).

4 disordered regions span residues 83–185, 219–290, 337–360, and 396–543; these read EEGL…QARA, ATAE…ELLT, QLPLEPGSTEPNSEPPDPCLSSHS, and DFVD…SPRV. Composition is skewed to low complexity over residues 96–108, 134–144, and 175–185; these read APSAGGAAPCSPR, AGAAARAADAA, and AAAAAGAQARA. Position 106 is a phosphoserine (Ser-106). Positions 220–244 are enriched in basic and acidic residues; the sequence is TAEEKPARALPAQDDRGASREREEG. Low complexity predominate over residues 246-273; that stretch reads LAEPAPVPAVAHSPPATVEAATSRASPP. Residue Ser-271 is modified to Phosphoserine. Over residues 396–406 the composition is skewed to acidic residues; the sequence is DFVDQESDGSE. Composition is skewed to low complexity over residues 407-417 and 498-508; these read ESSSGPKDSPG and RSSLAGRAKLS. Residues 521–533 show a composition bias toward basic residues; that stretch reads KRSRRPPRSRKPS. 2 ANK repeats span residues 630–659 and 669–699; these read TGYTALHWIAKHGDLRALQDLVSGAKKAGI and CGYTPLHLAAIHGHQGVIKLLVQRLASRVNV. Ser-761 carries the phosphoserine modification.

The protein belongs to the SOWAH family.

This is Ankyrin repeat domain-containing protein SOWAHB (SOWAHB) from Homo sapiens (Human).